A 281-amino-acid polypeptide reads, in one-letter code: 2,3,4,5-tetrahydropyridine-2,6-dicarboxylate N-succinyltransferase (281 aa).

Residues Arg-108 and Asp-145 each coordinate substrate.

The protein belongs to the transferase hexapeptide repeat family. Homotrimer.

Its subcellular location is the cytoplasm. It carries out the reaction (S)-2,3,4,5-tetrahydrodipicolinate + succinyl-CoA + H2O = (S)-2-succinylamino-6-oxoheptanedioate + CoA. It functions in the pathway amino-acid biosynthesis; L-lysine biosynthesis via DAP pathway; LL-2,6-diaminopimelate from (S)-tetrahydrodipicolinate (succinylase route): step 1/3. The polypeptide is 2,3,4,5-tetrahydropyridine-2,6-dicarboxylate N-succinyltransferase (Nitrobacter hamburgensis (strain DSM 10229 / NCIMB 13809 / X14)).